We begin with the raw amino-acid sequence, 338 residues long: MAATVGDGSGTEEACRNMESKEEFVKVRKKDLERLTTEVMQIRDFLPRILNGELLESFQKLKMVEKNLERKEQELEQLIMDREHFKARLETAQADSGREKKEKLALRQQLNEAKQQLLQQAEYCTQMGAVTCTLLWGVSSSEEVVKTILGGDKALKFFNITGQTMESFVKSLDGDVKEVDSDENQFVFALAGIVTNVAAIACGREFLVNSSRVLLDTMLQLLGDLKPGQCTKLKVLMLMSLYNVSINSKGLKYITESPGFIPLLWWLLSDPDAEVCLHTLRLIQSVVLEPDVFSKVASELQSSLPLQRILAMSKSRNSHLQSAAQELLEDLRALDCNV.

The tract at residues 1–20 (MAATVGDGSGTEEACRNMES) is disordered. Positions 12-126 (EEACRNMESK…LLQQAEYCTQ (115 aa)) form a coiled coil. The segment at 18 to 55 (MESKEEFVKVRKKDLERLTTEVMQIRDFLPRILNGELL) is interaction with BRME1. The interval 87–338 (ARLETAQADS…EDLRALDCNV (252 aa)) is interaction with BRCA2.

Interacts (via C-terminus) with BNC1. Associates with HSF2. The interaction seems to occur between the trimerization domain of HSF2 and the N-terminal hydrophilic region of HSF2BP. Interacts (via N-terminus) with BRME1. Interacts with BRCA2 and BRME1; the interactions are direct and allow the formation of a ternary complex. The complex BRME1:HSF2BP:BRCA2 interacts with SPATA22, MEIOB and RAD51. Sumoylated by UBE2I in response to MEKK1-mediated stimuli. As to expression, expressed in testis and, to a lesser extent, in lung and muscle.

The protein resides in the cytoplasm. Its subcellular location is the chromosome. Meiotic recombination factor component of recombination bridges involved in meiotic double-strand break repair. Modulates the localization of recombinases DMC1:RAD51 to meiotic double-strand break (DSB) sites through the interaction with BRCA2 and its recruitment during meiotic recombination. Indispensable for the DSB repair, homologous synapsis, and crossover formation that are needed for progression past metaphase I, is essential for spermatogenesis and male fertility. Required for proper recombinase recruitment in female meiosis. Inhibits BNC1 transcriptional activity during spermatogenesis, probably by sequestering it in the cytoplasm. May be involved in modulating HSF2 activation in testis. This chain is Heat shock factor 2-binding protein, found in Mus musculus (Mouse).